Here is a 138-residue protein sequence, read N- to C-terminus: Proofreading thioesterase EntH (138 aa).

E64 serves as the catalytic Nucleophile or proton acceptor.

The protein belongs to the thioesterase PaaI family. In terms of assembly, homotetramer. Dimer of dimers. Interacts specifically with the aryl carrier protein (ArCP) domain of EntB.

The protein resides in the cytoplasm. It functions in the pathway siderophore biosynthesis; enterobactin biosynthesis. Required for optimal enterobactin synthesis. Acts as a proofreading enzyme that prevents EntB misacylation by hydrolyzing the thioester bound existing between EntB and wrongly charged molecules. In Citrobacter rodentium (strain ICC168) (Citrobacter freundii biotype 4280), this protein is Proofreading thioesterase EntH.